Here is a 339-residue protein sequence, read N- to C-terminus: Anthranilate phosphoribosyltransferase (339 aa).

Residues glycine 82, glycine 85–aspartate 86, asparagine 92–threonine 95, lysine 110–serine 118, and serine 122 contribute to the 5-phospho-alpha-D-ribose 1-diphosphate site. Glycine 82 contributes to the anthranilate binding site. Serine 94 lines the Mg(2+) pocket. Residue asparagine 113 participates in anthranilate binding. Anthranilate is bound at residue arginine 168. The Mg(2+) site is built by aspartate 227 and glutamate 228.

The protein belongs to the anthranilate phosphoribosyltransferase family. In terms of assembly, homodimer. It depends on Mg(2+) as a cofactor.

It carries out the reaction N-(5-phospho-beta-D-ribosyl)anthranilate + diphosphate = 5-phospho-alpha-D-ribose 1-diphosphate + anthranilate. Its pathway is amino-acid biosynthesis; L-tryptophan biosynthesis; L-tryptophan from chorismate: step 2/5. Functionally, catalyzes the transfer of the phosphoribosyl group of 5-phosphorylribose-1-pyrophosphate (PRPP) to anthranilate to yield N-(5'-phosphoribosyl)-anthranilate (PRA). This chain is Anthranilate phosphoribosyltransferase, found in Vesicomyosocius okutanii subsp. Calyptogena okutanii (strain HA).